A 261-amino-acid polypeptide reads, in one-letter code: Hydroxyethylthiazole kinase (261 aa).

A substrate-binding site is contributed by M40. Positions 116 and 162 each coordinate ATP. Substrate is bound at residue G189.

The protein belongs to the Thz kinase family. Mg(2+) is required as a cofactor.

The catalysed reaction is 5-(2-hydroxyethyl)-4-methylthiazole + ATP = 4-methyl-5-(2-phosphooxyethyl)-thiazole + ADP + H(+). Its pathway is cofactor biosynthesis; thiamine diphosphate biosynthesis; 4-methyl-5-(2-phosphoethyl)-thiazole from 5-(2-hydroxyethyl)-4-methylthiazole: step 1/1. Its function is as follows. Catalyzes the phosphorylation of the hydroxyl group of 4-methyl-5-beta-hydroxyethylthiazole (THZ). The chain is Hydroxyethylthiazole kinase from Methanosarcina acetivorans (strain ATCC 35395 / DSM 2834 / JCM 12185 / C2A).